Reading from the N-terminus, the 727-residue chain is Plakophilin-1 (727 aa).

The interval 1–235 is required for binding to single stranded DNA; the sequence is MNHSPLKTAL…SFSHSRASSK (235 aa). The tract at residues 1–287 is required for interaction with EIF4A1; the sequence is MNHSPLKTAL…ESAKQQVYQL (287 aa). Residue serine 4 is modified to Phosphoserine. The segment at 48 to 69 is disordered; that stretch reads TVKRQKSKSSQSSTLSHSNRGS. Phosphorylation in this region is required for cytoplasmic localization and protein stabilization regions lie at residues 54 to 69 and 117 to 192; these read SKSS…NRGS and RFSS…STCS. Serine 119, serine 120, serine 122, and serine 143 each carry phosphoserine. The required for WNT-mediated nuclear localization stretch occupies residues 161-270; that stretch reads YCDPRGTLRK…KCQAIGAYYI (110 aa). ARM repeat units lie at residues 244–275, 276–317, 318–360, 361–412, 413–443, 505–536, 537–583, 584–629, and 630–693; these read SGLT…HTCF, QDES…NLVF, RSTT…NLSS, TDEL…GCLR, NLSS…NCVA, NYDC…LNLM, GKSK…IARL, LQSG…SHTG, and NTSN…DMWS.

It belongs to the beta-catenin family. As to quaternary structure, part of a complex that contains DSG3, PKP1, YAP1 and YWHAG; the complex is required for localization of DSG3 and YAP1 to the cell membrane in keratinocytes. Interacts (via N-terminus) with KRT5/CK5, KRT8/CK8 (via rod domain), KRT15/CK15 and KRT18/CK18 (via rod domain) as part of intermediate filaments. Interacts with VIM (via rod domain). Interacts with DSP. Interacts with DES. Interacts with FXR1; the interaction may facilitate the binding of PKP1 to PKP2, PKP3 and DSP mRNA. Interacts (via N-terminus) with EIF4A1; the interaction promotes EIF4A1 recruitment to the cap-dependent translation complex and EIF4A1 ATPase activity. Interacts with TJP1/ZO-1; the interaction facilitates TJP1/ZO-1 localization to the plasma membrane. Interacts (when phosphorylated) with YWHAG; the interaction results in translocation of PKP1 to the cytoplasm and loss of intercellular adhesion in keratinocytes. In terms of processing, phosphorylated by AKT2; required for interaction with YWHAG and subsequent localization away from desmosomes to the cytoplasm. Phosphorylation of Ser-119 by AKT2 promotes PKP1-driven cap-dependent mRNA translation and decreases intercellular adhesion, phosphorylation is promoted by insulin. Phosphorylation by RIPK4 at the N-terminus is required for its role in differentiation of keratinocytes and DSG1 localization at cell junctions.

It is found in the nucleus. Its subcellular location is the cytoplasm. The protein resides in the perinuclear region. It localises to the cell junction. The protein localises to the desmosome. It is found in the cell membrane. Its subcellular location is the stress granule. A component of desmosome cell-cell junctions which are required for positive regulation of cellular adhesion. Plays a role in desmosome protein expression regulation and localization to the desmosomal plaque, thereby maintaining cell sheet integrity and anchorage of desmosomes to intermediate filaments. Required for localization of DSG3 and YAP1 to the cell membrane in keratinocytes in response to mechanical strain, via the formation of an interaction complex composed of DSG3, YAP1, PKP1 and YWHAG. Positively regulates differentiation of keratinocytes, potentially via promoting localization of DSG1 at desmosome cell junctions. Required for calcium-independent development and maturation of desmosome plaques specifically at lateral cell-cell contacts in differentiating keratinocytes. Plays a role in the maintenance of DSG3 protein abundance, DSG3 clustering and localization of these clusters to the cell membrane in keratinocytes. May also promote keratinocyte proliferation and morphogenesis during postnatal development. Required for tight junction inside-out transepidermal barrier function of the skin. Promotes Wnt-mediated proliferation and differentiation of ameloblasts, via facilitating TJP1/ZO-1 localization to tight junctions. Binds single-stranded DNA (ssDNA), and may thereby play a role in sensing DNA damage and promoting cell survival. Positively regulates cap-dependent translation and as a result cell proliferation, via recruitment of EIF4A1 to the initiation complex and promotion of EIF4A1 ATPase activity. Regulates the mRNA stability and protein abundance of desmosome components PKP2, PKP3, DSC2 and DSP, potentially via its interaction with FXR1. May facilitate the formation of intermediate filaments. In Bos taurus (Bovine), this protein is Plakophilin-1 (PKP1).